Reading from the N-terminus, the 194-residue chain is Recombination protein RecR (194 aa).

A C4-type zinc finger spans residues 53–68 (CEICFNLDVTSPCSIC). One can recognise a Toprim domain in the interval 76 to 171 (SLLCIVEELG…KVTRLACGIP (96 aa)).

This sequence belongs to the RecR family.

Its function is as follows. May play a role in DNA repair. It seems to be involved in an RecBC-independent recombinational process of DNA repair. It may act with RecF and RecO. This Anaplasma phagocytophilum (strain HZ) protein is Recombination protein RecR.